Consider the following 113-residue polypeptide: Virion membrane protein A21 homolog (113 aa).

Residues 1 to 23 (MFVLFLIVCYFILIFNIIVPKIA) traverse the membrane as a helical; Signal-anchor for type III membrane protein segment. Over 24–113 (DKLRLEHEAF…CERAYTELFL (90 aa)) the chain is Virion surface.

The protein belongs to the chordopoxvirinae A21 family. In terms of assembly, envelope protein part of a stable entry-fusion complex (EFC) which is at least composed of proteins A16, A21, A28, G3, G9, H2, J5, and L5. Formation of the viral membrane is necessary for the assembly of the complex. Post-translationally, contains two intramolecular disulfide bonds. They are created by the viral disulfide bond formation pathway, a poxvirus-specific pathway that operates on the cytoplasmic side of the MV membranes.

Its subcellular location is the virion membrane. In terms of biological role, envelope protein part of the entry-fusion complex responsible for the virus membrane fusion with host cell membrane during virus entry. This chain is Virion membrane protein A21 homolog, found in Vertebrata (FPV).